The chain runs to 256 residues: 3-dehydroquinate dehydratase (256 aa).

3-dehydroquinate contacts are provided by residues Ser-19, 38–40, and Arg-68; that span reads EIR. His-122 acts as the Proton donor/acceptor in catalysis. Residue Lys-147 is the Schiff-base intermediate with substrate of the active site. 3-dehydroquinate is bound by residues Arg-185, Thr-204, and Gln-208.

The protein belongs to the type-I 3-dehydroquinase family. In terms of assembly, homodimer.

It catalyses the reaction 3-dehydroquinate = 3-dehydroshikimate + H2O. It functions in the pathway metabolic intermediate biosynthesis; chorismate biosynthesis; chorismate from D-erythrose 4-phosphate and phosphoenolpyruvate: step 3/7. Functionally, involved in the third step of the chorismate pathway, which leads to the biosynthesis of aromatic amino acids. Catalyzes the cis-dehydration of 3-dehydroquinate (DHQ) and introduces the first double bond of the aromatic ring to yield 3-dehydroshikimate. The polypeptide is 3-dehydroquinate dehydratase (Methanospirillum hungatei JF-1 (strain ATCC 27890 / DSM 864 / NBRC 100397 / JF-1)).